The chain runs to 136 residues: Protein NrdI (136 aa).

This sequence belongs to the NrdI family.

Probably involved in ribonucleotide reductase function. In Erwinia tasmaniensis (strain DSM 17950 / CFBP 7177 / CIP 109463 / NCPPB 4357 / Et1/99), this protein is Protein NrdI.